Here is a 351-residue protein sequence, read N- to C-terminus: AA9 family lytic polysaccharide monooxygenase A (351 aa).

H1 contacts Cu(2+). C52 and C178 form a disulfide bridge. N-linked (GlcNAc...) asparagine glycosylation occurs at N53. Residue H86 participates in Cu(2+) binding. N138 carries N-linked (GlcNAc...) asparagine glycosylation. 2 residues coordinate O2: H164 and Q173. Y175 contributes to the Cu(2+) binding site. S280 carries GPI-anchor amidated serine lipidation. Positions 281-351 (SAIGTSTASS…RSGTLGRLSF (71 aa)) are cleaved as a propeptide — removed in mature form.

Belongs to the polysaccharide monooxygenase AA9 family. It depends on Cu(2+) as a cofactor.

The protein resides in the cell membrane. It carries out the reaction [(1-&gt;4)-beta-D-glucosyl]n+m + reduced acceptor + O2 = 4-dehydro-beta-D-glucosyl-[(1-&gt;4)-beta-D-glucosyl]n-1 + [(1-&gt;4)-beta-D-glucosyl]m + acceptor + H2O.. Its function is as follows. Lytic polysaccharide monooxygenase (LPMO) that depolymerizes crystalline and amorphous polysaccharides via the oxidation of scissile alpha- or beta-(1-4)-glycosidic bonds, yielding C1 or C4 oxidation products. Catalysis by LPMOs requires the reduction of the active-site copper from Cu(II) to Cu(I) by a reducing agent and H(2)O(2) or O(2) as a cosubstrate. Functionally, has broad specificity, cleaving at any position along the beta-glucan backbone of xyloglucan, regardless of substitutions. Shows minor activity on glucomannan. The polypeptide is AA9 family lytic polysaccharide monooxygenase A (Gloeophyllum trabeum (Brown rot fungus)).